Consider the following 753-residue polypeptide: Catalase-peroxidase (753 aa).

The tryptophyl-tyrosyl-methioninium (Trp-Tyr) (with M-264) cross-link spans 90 to 238; the sequence is WHSAGTYRVT…LASSHMGLIY (149 aa). The active-site Proton acceptor is the histidine 91. Positions 196-220 are disordered; it reads SEGQEGHEGHGVVQGDESKKQHTDI. A cross-link (tryptophyl-tyrosyl-methioninium (Tyr-Met) (with W-90)) is located at residues 238-264; that stretch reads YVNPEGPDGIPDPVASAKDIRVTFGRM. Position 279 (histidine 279) interacts with heme b.

The protein belongs to the peroxidase family. Peroxidase/catalase subfamily. As to quaternary structure, homodimer or homotetramer. Requires heme b as cofactor. Formation of the three residue Trp-Tyr-Met cross-link is important for the catalase, but not the peroxidase activity of the enzyme.

Its subcellular location is the cytoplasm. The enzyme catalyses H2O2 + AH2 = A + 2 H2O. The catalysed reaction is 2 H2O2 = O2 + 2 H2O. Its activity is regulated as follows. Inhibited by KCN. In terms of biological role, bifunctional enzyme with both catalase and broad-spectrum peroxidase activity. This Neurospora crassa (strain ATCC 24698 / 74-OR23-1A / CBS 708.71 / DSM 1257 / FGSC 987) protein is Catalase-peroxidase.